The chain runs to 161 residues: MTVISQVILQADDELRYPSSGELKSISDFLQTGVQRTRIVATLAENEKKIVQEATKQLWQKRPDFIAPGGNAYGERQRALCIRDFGWYLRLITYGVLAGDIEPIEKIGIIGVREMYNSLGVPVPGMVEAINSLKKASLDLLSSEDAAAAAPYFDYIIQAMS.

The residue at position 71 (Asn-71) is an N4-methylasparagine. A (2R,3E)-phycocyanobilin-binding site is contributed by Cys-81.

Belongs to the phycobiliprotein family. Heterohexamer of two alpha chains, one alpha-B chain and three beta chains. Contains one covalently linked phycocyanobilin chromophore. The chromophore is added by phycocyanobilin lyase CpcS 1.

Its subcellular location is the cellular thylakoid membrane. Light-harvesting photosynthetic bile pigment-protein from the phycobiliprotein complex. Allophycocyanin has a maximum absorption at approximately 654 nanometers. This chain is Allophycocyanin subunit alpha-B (apcD), found in Nostoc sp. (strain PCC 7120 / SAG 25.82 / UTEX 2576).